We begin with the raw amino-acid sequence, 755 residues long: Glucosylglycerol-phosphate synthase (755 aa).

It belongs to the glycosyltransferase 20 family.

It catalyses the reaction ADP-alpha-D-glucose + sn-glycerol 3-phosphate = 2-O-(alpha-D-glucopyranosyl)-sn-glycerol 3-phosphate + ADP + H(+). Its pathway is glycan metabolism; glucosylglycerol biosynthesis. In terms of biological role, involved in salt tolerance by producing GG-phosphate from ADP-glucose and glycerol-3-phosphate (G3P), an intermediate in the synthesis of the osmolyte glucosylglycerol (GG). The chain is Glucosylglycerol-phosphate synthase (ggpS) from Pseudomonas anguilliseptica.